An 809-amino-acid chain; its full sequence is PiggyBac transposable element-derived protein 1 (809 aa).

The SCAN box domain maps to Arg44–Ser126. Positions Cys170 to Pro199 are disordered. A Glycyl lysine isopeptide (Lys-Gly) (interchain with G-Cter in SUMO2) cross-link involves residue Lys218. Positions Lys271–Pro297 are disordered. Ser360 bears the Phosphoserine mark.

In Homo sapiens (Human), this protein is PiggyBac transposable element-derived protein 1 (PGBD1).